A 91-amino-acid polypeptide reads, in one-letter code: Small ribosomal subunit protein uS15c (91 aa).

This sequence belongs to the universal ribosomal protein uS15 family. As to quaternary structure, part of the 30S ribosomal subunit.

The protein resides in the plastid. It is found in the chloroplast. The sequence is that of Small ribosomal subunit protein uS15c (rps15) from Eucalyptus globulus subsp. globulus (Tasmanian blue gum).